Consider the following 547-residue polypeptide: (E)-beta-caryophyllene synthase (547 aa).

Mg(2+) contacts are provided by D302 and D306. Substrate is bound by residues D302, D306, R443, and N446. The DDXXD motif motif lies at 302–306; that stretch reads DDLYD. Residues N446 and E454 each coordinate Mg(2+).

It belongs to the terpene synthase family. In terms of assembly, monomer. Mg(2+) serves as cofactor. Mn(2+) is required as a cofactor.

The protein localises to the cytoplasm. It catalyses the reaction (2E,6E)-farnesyl diphosphate = (-)-(E)-beta-caryophyllene + diphosphate. The protein operates within secondary metabolite biosynthesis; terpenoid biosynthesis. Its function is as follows. Component of the volatile terpenes biosynthesis pathways. Sesquiterpene synthase that converts farnesyl diphosphate to (E)-beta-caryophyllene. Involved in indirect defense by producing volatile signals attracting natural enemies of herbivores. The protein is (E)-beta-caryophyllene synthase of Zea mays (Maize).